A 38-amino-acid polypeptide reads, in one-letter code: Potassium channel toxin alpha-KTx 3.2 (38 aa).

Intrachain disulfides connect cysteine 8/cysteine 28, cysteine 14/cysteine 33, and cysteine 18/cysteine 35.

Belongs to the short scorpion toxin superfamily. Potassium channel inhibitor family. Alpha-KTx 03 subfamily. In terms of tissue distribution, expressed by the venom gland.

It localises to the secreted. In terms of biological role, potent inhibitor of the Shaker potassium channels and its mammalian homologs (Kv1.1/KCNA1, Kv1.3/KCNA3, Kv1.6/KCNA6) (Ki&lt;1 nM for all channels). Also blocks Kv1.2/KCNA2 (IC(50)=26.8 nM). It also shows a weak interaction with nicotinic acetylcholine receptors (nAChR), suggesting it may weakly inhibit it. The polypeptide is Potassium channel toxin alpha-KTx 3.2 (Leiurus hebraeus (Hebrew deathstalker scorpion)).